Consider the following 680-residue polypeptide: DNA-directed RNA polymerase subunit beta' (680 aa).

4 residues coordinate Zn(2+): Cys69, Cys71, Cys87, and Cys90. Positions 489, 491, and 493 each coordinate Mg(2+).

This sequence belongs to the RNA polymerase beta' chain family. RpoC1 subfamily. In plastids the minimal PEP RNA polymerase catalytic core is composed of four subunits: alpha, beta, beta', and beta''. When a (nuclear-encoded) sigma factor is associated with the core the holoenzyme is formed, which can initiate transcription. It depends on Mg(2+) as a cofactor. The cofactor is Zn(2+).

The protein resides in the plastid. It localises to the chloroplast. The enzyme catalyses RNA(n) + a ribonucleoside 5'-triphosphate = RNA(n+1) + diphosphate. Functionally, DNA-dependent RNA polymerase catalyzes the transcription of DNA into RNA using the four ribonucleoside triphosphates as substrates. This Carica papaya (Papaya) protein is DNA-directed RNA polymerase subunit beta'.